The following is a 156-amino-acid chain: Endogenous retrovirus group K member 21 Pro protein (156 aa).

Positions 21–96 constitute a Peptidase A2 domain; it reads FEGLVDTGAD…IPLNLWGRDL (76 aa). Residue aspartate 26 is part of the active site. Residues 111–156 form the G-patch domain; that stretch reads YSPTSQKIMTKMGYIPGKGLGKNEDGIKVPVEAKINQKREGIGYPF.

The protein belongs to the peptidase A2 family. HERV class-II K(HML-2) subfamily. In terms of assembly, active as a homodimer. Autoproteolytically processed at the N-terminus. Expected C-terminal autoprocessing not detected. The sequence shown is that of the processed Pro protein.

It catalyses the reaction Processing at the authentic HIV-1 PR recognition site and release of the mature p17 matrix and the p24 capsid protein, as a result of the cleavage of the -SQNY-|-PIVQ- cleavage site.. Functionally, retroviral proteases have roles in the processing of the primary translation products and the maturation of the viral particle. Endogenous Pro proteins may have kept, lost or modified their original function during evolution. In Homo sapiens (Human), this protein is Endogenous retrovirus group K member 21 Pro protein (ERVK-21).